We begin with the raw amino-acid sequence, 471 residues long: UDP-N-acetylmuramate--L-alanine ligase (471 aa).

114 to 120 (GTHGKTT) contacts ATP.

This sequence belongs to the MurCDEF family.

It localises to the cytoplasm. The enzyme catalyses UDP-N-acetyl-alpha-D-muramate + L-alanine + ATP = UDP-N-acetyl-alpha-D-muramoyl-L-alanine + ADP + phosphate + H(+). Its pathway is cell wall biogenesis; peptidoglycan biosynthesis. Cell wall formation. The sequence is that of UDP-N-acetylmuramate--L-alanine ligase from Allorhizobium ampelinum (strain ATCC BAA-846 / DSM 112012 / S4) (Agrobacterium vitis (strain S4)).